Reading from the N-terminus, the 446-residue chain is DDB1- and CUL4-associated factor 12-A (446 aa).

Residues 1–12 (MTRRSVSRKRRA) are compositionally biased toward basic residues. The interval 1-32 (MTRRSVSRKRRANPGSGPGEQSDWDHSAHKRK) is disordered. 4 WD repeats span residues 132–173 (SHQS…PVCV), 177–215 (GHNDWIFSIAWISDTMAVSGSRDGSMGLWEMTDEVVNKS), 245–284 (PVNCKVRALAFNSNNKELGAVSLDGFFHLWKAEQTLSKLL), and 333–370 (EQGSGIRSVSFYEHIVTVGTGQGALLFYDIRAQRFLED).

It belongs to the WD repeat DCAF12 family. Component of the DCX(DCAF12) E3 ubiquitin ligase complex, at least composed of cul4 (cul4a or cul4b), ddb1, dcaf12 and rbx1.

The protein localises to the cytoplasm. It localises to the cytoskeleton. The protein resides in the microtubule organizing center. Its subcellular location is the centrosome. It is found in the nucleus. It participates in protein modification; protein ubiquitination. Functionally, substrate-recognition component of a DCX (DDB1-CUL4-X-box) E3 ubiquitin-protein ligase complex of the DesCEND (destruction via C-end degrons) pathway, which recognizes a C-degron located at the extreme C terminus of target proteins, leading to their ubiquitination and degradation. The C-degron recognized by the DesCEND pathway is usually a motif of less than ten residues and can be present in full-length proteins, truncated proteins or proteolytically cleaved forms. The DCX(DCAF12) complex specifically recognizes proteins with a diglutamate (Glu-Glu) at the C-terminus leading to their ubiquitination and degradation. Also directly recognizes the C-terminal glutamate-leucine (Glu-Leu) degron as an alternative degron in proteins leading to their ubiquitination and degradation. This chain is DDB1- and CUL4-associated factor 12-A (dcaf12-a), found in Xenopus laevis (African clawed frog).